A 253-amino-acid polypeptide reads, in one-letter code: Triosephosphate isomerase (253 aa).

9–11 (NWK) lines the substrate pocket. Catalysis depends on His-97, which acts as the Electrophile. Residue Glu-169 is the Proton acceptor of the active site. Substrate is bound by residues Gly-175, Ser-215, and 236-237 (GG).

This sequence belongs to the triosephosphate isomerase family. As to quaternary structure, homodimer.

The protein resides in the cytoplasm. It carries out the reaction D-glyceraldehyde 3-phosphate = dihydroxyacetone phosphate. It participates in carbohydrate biosynthesis; gluconeogenesis. The protein operates within carbohydrate degradation; glycolysis; D-glyceraldehyde 3-phosphate from glycerone phosphate: step 1/1. In terms of biological role, involved in the gluconeogenesis. Catalyzes stereospecifically the conversion of dihydroxyacetone phosphate (DHAP) to D-glyceraldehyde-3-phosphate (G3P). The polypeptide is Triosephosphate isomerase (Staphylococcus aureus (strain Mu50 / ATCC 700699)).